Consider the following 545-residue polypeptide: CTP synthase (545 aa).

Positions 1 to 266 (MATNYIFVTG…DDFVCERFRL (266 aa)) are amidoligase domain. Residue Ser14 coordinates CTP. Ser14 contacts UTP. ATP-binding positions include 15 to 20 (SLGKGI) and Asp72. Mg(2+) contacts are provided by Asp72 and Glu140. Residues 147–149 (DIE), 187–192 (KTKPTQ), and Lys223 contribute to the CTP site. UTP contacts are provided by residues 187-192 (KTKPTQ) and Lys223. 239-241 (KDV) contributes to the ATP binding site. Residues 291–542 (TIGMVGKYTE…VKAAYENHKK (252 aa)) enclose the Glutamine amidotransferase type-1 domain. Gly352 provides a ligand contact to L-glutamine. Cys379 functions as the Nucleophile; for glutamine hydrolysis in the catalytic mechanism. Residues 380 to 383 (LGMQ), Glu403, and Arg470 each bind L-glutamine. Active-site residues include His515 and Glu517.

This sequence belongs to the CTP synthase family. Homotetramer.

It catalyses the reaction UTP + L-glutamine + ATP + H2O = CTP + L-glutamate + ADP + phosphate + 2 H(+). The enzyme catalyses L-glutamine + H2O = L-glutamate + NH4(+). The catalysed reaction is UTP + NH4(+) + ATP = CTP + ADP + phosphate + 2 H(+). It functions in the pathway pyrimidine metabolism; CTP biosynthesis via de novo pathway; CTP from UDP: step 2/2. Allosterically activated by GTP, when glutamine is the substrate; GTP has no effect on the reaction when ammonia is the substrate. The allosteric effector GTP functions by stabilizing the protein conformation that binds the tetrahedral intermediate(s) formed during glutamine hydrolysis. Inhibited by the product CTP, via allosteric rather than competitive inhibition. Functionally, catalyzes the ATP-dependent amination of UTP to CTP with either L-glutamine or ammonia as the source of nitrogen. Regulates intracellular CTP levels through interactions with the four ribonucleotide triphosphates. The chain is CTP synthase from Haemophilus influenzae (strain PittGG).